A 67-amino-acid chain; its full sequence is Large ribosomal subunit protein bL31c (67 aa).

Belongs to the bacterial ribosomal protein bL31 family. Type A subfamily. Part of the 50S ribosomal subunit.

It localises to the plastid. Its subcellular location is the chloroplast. Its function is as follows. Binds the 23S rRNA. This is Large ribosomal subunit protein bL31c (rpl31) from Cyanidioschyzon merolae (strain NIES-3377 / 10D) (Unicellular red alga).